A 234-amino-acid chain; its full sequence is Carboxy-S-adenosyl-L-methionine synthase (234 aa).

S-adenosyl-L-methionine-binding positions include tyrosine 35, 60–62 (GCS), 109–110 (DI), asparagine 124, and arginine 191.

It belongs to the class I-like SAM-binding methyltransferase superfamily. Cx-SAM synthase family. In terms of assembly, homodimer.

It catalyses the reaction prephenate + S-adenosyl-L-methionine = carboxy-S-adenosyl-L-methionine + 3-phenylpyruvate + H2O. Functionally, catalyzes the conversion of S-adenosyl-L-methionine (SAM) to carboxy-S-adenosyl-L-methionine (Cx-SAM). The protein is Carboxy-S-adenosyl-L-methionine synthase of Campylobacter fetus subsp. fetus (strain 82-40).